A 242-amino-acid polypeptide reads, in one-letter code: tRNA pseudouridine synthase A (242 aa).

The active-site Nucleophile is the D51. Y107 serves as a coordination point for substrate.

Belongs to the tRNA pseudouridine synthase TruA family. In terms of assembly, homodimer.

The catalysed reaction is uridine(38/39/40) in tRNA = pseudouridine(38/39/40) in tRNA. Functionally, formation of pseudouridine at positions 38, 39 and 40 in the anticodon stem and loop of transfer RNAs. The protein is tRNA pseudouridine synthase A of Helicobacter pylori (strain J99 / ATCC 700824) (Campylobacter pylori J99).